The sequence spans 135 residues: ATP synthase epsilon chain (135 aa).

The protein belongs to the ATPase epsilon chain family. As to quaternary structure, F-type ATPases have 2 components, CF(1) - the catalytic core - and CF(0) - the membrane proton channel. CF(1) has five subunits: alpha(3), beta(3), gamma(1), delta(1), epsilon(1). CF(0) has three main subunits: a, b and c.

It is found in the cell inner membrane. Its function is as follows. Produces ATP from ADP in the presence of a proton gradient across the membrane. This Chelativorans sp. (strain BNC1) protein is ATP synthase epsilon chain.